A 671-amino-acid chain; its full sequence is Arginine--tRNA ligase (671 aa).

The 'HIGH' region motif lies at 124–134; that stretch reads PNVAKPMHVGH. Residues 223-254 form a disordered region; it reads KSDAKTAKEVSDQSESDENLKPKDKKKLRKNA. The span at 224-233 shows a compositional bias: basic and acidic residues; the sequence is SDAKTAKEVS.

The protein belongs to the class-I aminoacyl-tRNA synthetase family. Monomer.

The protein resides in the cytoplasm. The catalysed reaction is tRNA(Arg) + L-arginine + ATP = L-arginyl-tRNA(Arg) + AMP + diphosphate. In Rhodopirellula baltica (strain DSM 10527 / NCIMB 13988 / SH1), this protein is Arginine--tRNA ligase.